The following is a 498-amino-acid chain: Putative F-box/FBD/LRR-repeat protein At4g03220 (498 aa).

One can recognise an F-box domain in the interval 23–71 (VDRISNLPDSLNHQILLLLPLKSAAQASLLSKRWRSLFLSLPDLDFTSI). 3 LRR repeats span residues 148–172 (SQNLRALTLKSANLGFRLPPSSSAR), 175–200 (FQKLTSLSLSRVILHNQPCLSDFFTD), and 235–259 (SLQLEGLEVSGNKLQKLKVESCFYS). Residues 416–466 (YWESQAYELESFLNHLEFVEIHGFVECENEMSLAIFLLRHGKALIKMTLRS) enclose the FBD domain.

The protein is Putative F-box/FBD/LRR-repeat protein At4g03220 of Arabidopsis thaliana (Mouse-ear cress).